A 629-amino-acid polypeptide reads, in one-letter code: Nicotinic receptor-associated protein 1 (629 aa).

C2 domains lie at 1–144 (MNQP…KAHL) and 162–299 (RTGS…ELLL). Residues Asp-33, Asp-39, Asp-108, Asp-110, Asp-122, Asp-192, Asp-198, Asp-254, Asp-256, and Asp-274 each coordinate Ca(2+). Positions 342 to 561 (EFAVAVDFTA…LDPDVVQENL (220 aa)) constitute a VWFA domain. 2 disordered regions span residues 581–600 (GFQP…PPDY) and 607–629 (IGRR…PPMY).

This sequence belongs to the copine family. In terms of assembly, interacts with nicotinic acetylcholine receptor. Requires Ca(2+) as cofactor.

It localises to the cell membrane. Its function is as follows. Exhibits calcium-dependent phospholipid binding properties. May function in membrane trafficking. Regulates synaptic levels of nicotinic acetylcholine receptor subunit lev-1 and unc-38 in the nerve cord. Involved in nicotinic acetylcholine receptor (nAChR)-mediated sensitivity to nicotine and levamisole. Affects directional sperm motility. In Caenorhabditis briggsae, this protein is Nicotinic receptor-associated protein 1.